The following is a 647-amino-acid chain: MSDEIFPVPAEWKKRAIVDAEKYRHMYEASINDPESFWRREGLRIDWMKPYTKIKDTSFDPHNVSIKWFEDGTLNASVNCIDRHLERRAGQVAIIWEGDDPSIDRKITYRELHDEVCRFANVLKARGVKKGDRVTIYMPMIPEAAYAMLACARIGAVHSVVFGGFSPDSLAGRIVDCASSCVITADEGVRGGRKIPLKANTDEALKKCPGVKSVIVVKHTGGAVAMEKGRDVWYAEEAAKVSATCAPEEMNAEDPLFILYTSGSTGKPKGVLHTTGGYMVYASMTHQYVFDYHDGDIYWCTADVGWVTGHSYILYGPLANGATTLMFEGVPNYPDASRCWQVIDKHEVNIFYTAPTALRALMREGEEPVKKTSRKSLRLLGSVGEPINPEAWLWYHRVVGDGRCPIVDTWWQTETGGILISPLPGAIATKPGSATKPFFGVQPVIVDAEGNVQEGATTGNLCIDDSWPGQMRTVYGDHQRFVETYFIQYPGRYFTGDGCRRDEDGYYWITGRVDDVLNVSGHRMGTAEVESALVAHPKVAEAAVVGYPHDIKGQGIYAYVTLIAGEAATEELRKELVTWVRKEIGPIASPDLIQFAPGLPKTRSGKIMRRILRKIAEDDFSNLGDTSTLADPSVVTDLVDNRQNKAG.

CoA contacts are provided by residues 190-193 (RGGR), threonine 308, and asparagine 332. Residues 384–386 (GEP), 408–413 (DTWWQT), aspartate 497, and arginine 512 contribute to the ATP site. Position 520 (serine 520) interacts with CoA. ATP is bound at residue arginine 523. Residues valine 534, histidine 536, and valine 539 each coordinate Mg(2+). Arginine 581 is a binding site for CoA. N6-acetyllysine is present on lysine 606.

Belongs to the ATP-dependent AMP-binding enzyme family. It depends on Mg(2+) as a cofactor. Acetylated. Deacetylation by the SIR2-homolog deacetylase activates the enzyme.

The catalysed reaction is acetate + ATP + CoA = acetyl-CoA + AMP + diphosphate. In terms of biological role, catalyzes the conversion of acetate into acetyl-CoA (AcCoA), an essential intermediate at the junction of anabolic and catabolic pathways. AcsA undergoes a two-step reaction. In the first half reaction, AcsA combines acetate with ATP to form acetyl-adenylate (AcAMP) intermediate. In the second half reaction, it can then transfer the acetyl group from AcAMP to the sulfhydryl group of CoA, forming the product AcCoA. The polypeptide is Acetyl-coenzyme A synthetase (Parvibaculum lavamentivorans (strain DS-1 / DSM 13023 / NCIMB 13966)).